We begin with the raw amino-acid sequence, 153 residues long: MAKDVQVMLRQAVPGLGKPGEVVSVRPGYARNYLFPRQMAVRLTPGLLKEQQMRREQEAARKLAEKQQAENYKKALETIGRFVIRKKVGEKDLLFGQVTASDIAEVVLATSGLDIDRRNVLLDEEIKKTGVYLVQVKLHPEVTATLRIQVTPE.

Belongs to the bacterial ribosomal protein bL9 family.

Functionally, binds to the 23S rRNA. In Synechococcus sp. (strain JA-3-3Ab) (Cyanobacteria bacterium Yellowstone A-Prime), this protein is Large ribosomal subunit protein bL9.